We begin with the raw amino-acid sequence, 366 residues long: uncharacterized protein (366 aa).

Residues 59–222 (LNILHGIGET…LYDTPGIINN (164 aa)) enclose the CP-type G domain.

It belongs to the TRAFAC class YlqF/YawG GTPase family.

Binds GTP and GDP. This is an uncharacterized protein from Bacillus subtilis (strain 168).